Here is a 73-residue protein sequence, read N- to C-terminus: Large ribosomal subunit protein uL29 (73 aa).

The protein belongs to the universal ribosomal protein uL29 family.

This Synechococcus sp. (strain JA-2-3B'a(2-13)) (Cyanobacteria bacterium Yellowstone B-Prime) protein is Large ribosomal subunit protein uL29.